Here is a 229-residue protein sequence, read N- to C-terminus: UPF0228 protein MA_3119 (229 aa).

Low complexity predominate over residues 35-66 (STPVNTSTPVNTSTPVNTSTPVNTSTPVSTST). Residues 35–67 (STPVNTSTPVNTSTPVNTSTPVNTSTPVSTSTI) form a disordered region.

The protein belongs to the UPF0228 family.

This Methanosarcina acetivorans (strain ATCC 35395 / DSM 2834 / JCM 12185 / C2A) protein is UPF0228 protein MA_3119.